Consider the following 502-residue polypeptide: L-arabinose isomerase (502 aa).

Glutamate 306, glutamate 333, histidine 350, and histidine 449 together coordinate Mn(2+).

This sequence belongs to the arabinose isomerase family. Requires Mn(2+) as cofactor.

The enzyme catalyses beta-L-arabinopyranose = L-ribulose. It functions in the pathway carbohydrate degradation; L-arabinose degradation via L-ribulose; D-xylulose 5-phosphate from L-arabinose (bacterial route): step 1/3. Functionally, catalyzes the conversion of L-arabinose to L-ribulose. This Flavobacterium johnsoniae (strain ATCC 17061 / DSM 2064 / JCM 8514 / BCRC 14874 / CCUG 350202 / NBRC 14942 / NCIMB 11054 / UW101) (Cytophaga johnsonae) protein is L-arabinose isomerase.